A 470-amino-acid chain; its full sequence is D-serine/D-alanine/glycine transporter (470 aa).

The next 12 membrane-spanning stretches (helical) occupy residues 30-50, 51-71, 102-122, 128-148, 162-182, 211-231, 256-276, 283-303, 350-370, 371-391, 413-433, and 441-461; these read LIAI…KTIS, LAGP…FFVM, FTGW…VVAI, FWFP…LLLV, FWFA…GLVM, LSGF…IELV, IIMF…WSSV, FVEL…NFVV, FSCI…SVIG, AFTM…TIIL, PLGK…LVLL, and QALL…LFIG.

It belongs to the amino acid-polyamine-organocation (APC) superfamily. Amino acid transporter (AAT) (TC 2.A.3.1) family.

The protein localises to the cell inner membrane. The enzyme catalyses D-alanine(in) + H(+)(in) = D-alanine(out) + H(+)(out). The catalysed reaction is D-serine(out) + H(+)(out) = D-serine(in) + H(+)(in). It carries out the reaction glycine(in) + H(+)(in) = glycine(out) + H(+)(out). It catalyses the reaction D-cycloserine(in) + H(+)(in) = D-cycloserine(out) + H(+)(out). Uptake of D-serine is inhibited by D-alanine, D-cycloserine, glycine and at high concentrations of D-threonine. Functionally, permease that is involved in the transport across the cytoplasmic membrane of D-alanine, D-serine and glycine. Is the only transporter of D-alanine. Transports D-serine less efficiently than DsdX. In addition, in minimal media, transports the broad spectrum antibiotic D-cycloserine into the cell. Transports D-cycloserine only in minimal media, and not in a complex medium, suggesting that CycA does not play a role in D-cycloserine transport when E.coli is grown in a complex or biologically relevant medium, probably due to competition from other CycA substrates present in the medium. This chain is D-serine/D-alanine/glycine transporter (cycA), found in Escherichia coli O6:H1 (strain CFT073 / ATCC 700928 / UPEC).